The primary structure comprises 362 residues: N5-carboxyaminoimidazole ribonucleotide synthase (362 aa).

ATP contacts are provided by residues Arg108, Lys148, 153-159 (GYDGKGQ), 185-188 (EGFV), Glu193, His216, and 270-271 (NE). The ATP-grasp domain occupies 112–300 (KQFLNESGIE…QFEQHIRAVA (189 aa)).

It belongs to the PurK/PurT family. Homodimer.

It catalyses the reaction 5-amino-1-(5-phospho-beta-D-ribosyl)imidazole + hydrogencarbonate + ATP = 5-carboxyamino-1-(5-phospho-D-ribosyl)imidazole + ADP + phosphate + 2 H(+). Its pathway is purine metabolism; IMP biosynthesis via de novo pathway; 5-amino-1-(5-phospho-D-ribosyl)imidazole-4-carboxylate from 5-amino-1-(5-phospho-D-ribosyl)imidazole (N5-CAIR route): step 1/2. Catalyzes the ATP-dependent conversion of 5-aminoimidazole ribonucleotide (AIR) and HCO(3)(-) to N5-carboxyaminoimidazole ribonucleotide (N5-CAIR). This is N5-carboxyaminoimidazole ribonucleotide synthase from Brucella melitensis biotype 1 (strain ATCC 23456 / CCUG 17765 / NCTC 10094 / 16M).